The primary structure comprises 120 residues: NAD(P)H-quinone oxidoreductase subunit 3, chloroplastic (120 aa).

3 consecutive transmembrane segments (helical) span residues 9–29 (IFWA…LLSG), 64–84 (MFAL…PWAM), and 88–108 (VLGV…IVGL).

Belongs to the complex I subunit 3 family. In terms of assembly, NDH is composed of at least 16 different subunits, 5 of which are encoded in the nucleus.

The protein localises to the plastid. Its subcellular location is the chloroplast thylakoid membrane. The enzyme catalyses a plastoquinone + NADH + (n+1) H(+)(in) = a plastoquinol + NAD(+) + n H(+)(out). It catalyses the reaction a plastoquinone + NADPH + (n+1) H(+)(in) = a plastoquinol + NADP(+) + n H(+)(out). In terms of biological role, NDH shuttles electrons from NAD(P)H:plastoquinone, via FMN and iron-sulfur (Fe-S) centers, to quinones in the photosynthetic chain and possibly in a chloroplast respiratory chain. The immediate electron acceptor for the enzyme in this species is believed to be plastoquinone. Couples the redox reaction to proton translocation, and thus conserves the redox energy in a proton gradient. The chain is NAD(P)H-quinone oxidoreductase subunit 3, chloroplastic from Fagopyrum esculentum subsp. ancestrale (Wild buckwheat).